A 662-amino-acid chain; its full sequence is Translation factor GUF1, mitochondrial (662 aa).

The transit peptide at 1 to 28 directs the protein to the mitochondrion; it reads MYIHSSRTVLARYGSRTPLLRPSVLGRY. The region spanning 62 to 244 is the tr-type G domain; that stretch reads ENYRNFSIVA…AIVDHIPAPD (183 aa). GTP-binding positions include 71 to 78, 137 to 141, and 191 to 194; these read AHVDHGKS, DTPGH, and NKID.

This sequence belongs to the TRAFAC class translation factor GTPase superfamily. Classic translation factor GTPase family. LepA subfamily.

It is found in the mitochondrion inner membrane. It catalyses the reaction GTP + H2O = GDP + phosphate + H(+). Promotes mitochondrial protein synthesis. May act as a fidelity factor of the translation reaction, by catalyzing a one-codon backward translocation of tRNAs on improperly translocated ribosomes. Binds to mitochondrial ribosomes in a GTP-dependent manner. This is Translation factor GUF1, mitochondrial from Meyerozyma guilliermondii (strain ATCC 6260 / CBS 566 / DSM 6381 / JCM 1539 / NBRC 10279 / NRRL Y-324) (Yeast).